Reading from the N-terminus, the 709-residue chain is Polyribonucleotide nucleotidyltransferase (709 aa).

Residues aspartate 485 and aspartate 491 each coordinate Mg(2+). Positions 552-611 constitute a KH domain; the sequence is PRIYTMKIDPKKIKDVIGKGGATIRSLTEETGTSIDIDDDGTVKIAAVDSNAAKNVMGRI. Residues 621 to 689 enclose the S1 motif domain; that stretch reads GAIYKGKVTR…RQGRIRLTMK (69 aa).

Belongs to the polyribonucleotide nucleotidyltransferase family. Component of the RNA degradosome, which is a multiprotein complex involved in RNA processing and mRNA degradation. Mg(2+) serves as cofactor.

It localises to the cytoplasm. The catalysed reaction is RNA(n+1) + phosphate = RNA(n) + a ribonucleoside 5'-diphosphate. Involved in mRNA degradation. Catalyzes the phosphorolysis of single-stranded polyribonucleotides processively in the 3'- to 5'-direction. This is Polyribonucleotide nucleotidyltransferase from Haemophilus influenzae (strain PittEE).